The primary structure comprises 283 residues: NADH-ubiquinone oxidoreductase 30.4 kDa subunit, mitochondrial (283 aa).

The N-terminal 17 residues, 1–17 (MASKLCRSRALASALRS), are a transit peptide targeting the mitochondrion. Residues 258-283 (GAGIDRKPESFKLPTPKPETKPEEKK) are disordered.

The protein belongs to the complex I 30 kDa subunit family. Complex I is composed of about 40 different subunits. This is a component of the iron-sulfur protein fraction.

The protein localises to the mitochondrion inner membrane. It catalyses the reaction a ubiquinone + NADH + 5 H(+)(in) = a ubiquinol + NAD(+) + 4 H(+)(out). Its function is as follows. Core subunit of the mitochondrial membrane respiratory chain NADH dehydrogenase (Complex I) that is believed to belong to the minimal assembly required for catalysis. Complex I functions in the transfer of electrons from NADH to the respiratory chain. The immediate electron acceptor for the enzyme is believed to be ubiquinone. The polypeptide is NADH-ubiquinone oxidoreductase 30.4 kDa subunit, mitochondrial (nuo-31) (Neurospora crassa (strain ATCC 24698 / 74-OR23-1A / CBS 708.71 / DSM 1257 / FGSC 987)).